We begin with the raw amino-acid sequence, 211 residues long: Urease accessory protein UreE (211 aa).

Positions 170 to 211 (EHHGHSHDRGCDHSHSHSHDHDHDHGHVHGPGCGHAPHHRHD) are disordered. Over residues 176–196 (HDRGCDHSHSHSHDHDHDHGH) the composition is skewed to basic and acidic residues.

Belongs to the UreE family.

Its subcellular location is the cytoplasm. Functionally, involved in urease metallocenter assembly. Binds nickel. Probably functions as a nickel donor during metallocenter assembly. This is Urease accessory protein UreE from Ralstonia nicotianae (strain ATCC BAA-1114 / GMI1000) (Ralstonia solanacearum).